We begin with the raw amino-acid sequence, 427 residues long: Histidine--tRNA ligase (427 aa).

It belongs to the class-II aminoacyl-tRNA synthetase family. Homodimer.

The protein resides in the cytoplasm. It catalyses the reaction tRNA(His) + L-histidine + ATP = L-histidyl-tRNA(His) + AMP + diphosphate + H(+). The protein is Histidine--tRNA ligase (hisS) of Mycobacterium leprae (strain TN).